The sequence spans 159 residues: Major latex protein 146 (159 aa).

The protein belongs to the MLP family. As to expression, laticifer.

The protein resides in the vacuole. Its subcellular location is the cytoplasmic vesicle. In terms of biological role, not known; MLPs constitute up to 50% of the soluble latex protein. This Papaver somniferum (Opium poppy) protein is Major latex protein 146 (MLP146).